A 260-amino-acid polypeptide reads, in one-letter code: MSDQVMPTGQNPALQIRNLDFFYGDFKGLKNVNLDIAQKKVTAFIGPSGCGKSTLLRTFNRMYDLYPGQRAEGEILFHGKNLLEKSQDVNLVRAKIGMVFQKPTPFPMTIYENIAFGVRLYQRMSGSAMDDRVEWALKKAALWGEVKDKLNQSGLSLSGGQQQRLCIARAVAVKPEIVLLDEPTSALDPISTAKIEELINELKSDYTIAIVTHNMQQAARISDYTAFMYLGELIEFNETGTIFMRPGKKQTEDYITGRFG.

Residues 14–255 (LQIRNLDFFY…PGKKQTEDYI (242 aa)) form the ABC transporter domain. 46–53 (GPSGCGKS) contributes to the ATP binding site.

It belongs to the ABC transporter superfamily. Phosphate importer (TC 3.A.1.7) family. In terms of assembly, the complex is composed of two ATP-binding proteins (PstB), two transmembrane proteins (PstC and PstA) and a solute-binding protein (PstS).

Its subcellular location is the cell inner membrane. The catalysed reaction is phosphate(out) + ATP + H2O = ADP + 2 phosphate(in) + H(+). In terms of biological role, part of the ABC transporter complex PstSACB involved in phosphate import. Responsible for energy coupling to the transport system. The chain is Phosphate import ATP-binding protein PstB from Thiobacillus denitrificans (strain ATCC 25259 / T1).